The following is a 192-amino-acid chain: Signal peptidase complex subunit 2 (192 aa).

The Cytoplasmic segment spans residues 1–46 (MEEKKTESTNKNVKKANLLDHHSIKHILDESVSDIVTSRGYKEDVR). Residues 47-69 (LSNLKLILGTIIIVVALVAQFYN) form a helical membrane-spanning segment. The Lumenal portion of the chain corresponds to 70–78 (KKFPENRDF). The helical transmembrane segment at 79–98 (LIGCIALYVVLNAVLQLILY) threads the bilayer. Topologically, residues 99-192 (TKEKNAILFT…YAEEEPKKKK (94 aa)) are cytoplasmic.

It belongs to the SPCS2 family. As to quaternary structure, component of the signal peptidase complex (SPC) composed of a catalytic subunit SEC11 and three accessory subunits SPCS1, SPCS2 and SPCS3. The complex induces a local thinning of the ER membrane which is used to measure the length of the signal peptide (SP) h-region of protein substrates. This ensures the selectivity of the complex towards h-regions shorter than 18-20 amino acids.

Its subcellular location is the endoplasmic reticulum membrane. Functionally, component of the signal peptidase complex (SPC) which catalyzes the cleavage of N-terminal signal sequences from nascent proteins as they are translocated into the lumen of the endoplasmic reticulum. Enhances the enzymatic activity of SPC and facilitates the interactions between different components of the translocation site. The chain is Signal peptidase complex subunit 2 from Arabidopsis thaliana (Mouse-ear cress).